Consider the following 540-residue polypeptide: Glucose-6-phosphate isomerase (540 aa).

The Proton donor role is filled by Glu-350. Active-site residues include His-381 and Lys-503.

Belongs to the GPI family.

It is found in the cytoplasm. It catalyses the reaction alpha-D-glucose 6-phosphate = beta-D-fructose 6-phosphate. The protein operates within carbohydrate biosynthesis; gluconeogenesis. It functions in the pathway carbohydrate degradation; glycolysis; D-glyceraldehyde 3-phosphate and glycerone phosphate from D-glucose: step 2/4. Functionally, catalyzes the reversible isomerization of glucose-6-phosphate to fructose-6-phosphate. The polypeptide is Glucose-6-phosphate isomerase (Burkholderia lata (strain ATCC 17760 / DSM 23089 / LMG 22485 / NCIMB 9086 / R18194 / 383)).